We begin with the raw amino-acid sequence, 822 residues long: Probable alpha,alpha-trehalose-phosphate synthase [UDP-forming] 2 (822 aa).

The segment at 12 to 479 (PRLLVVANRL…GLDFMSELNG (468 aa)) is glycosyltransferase.

This sequence in the N-terminal section; belongs to the glycosyltransferase 20 family. In the C-terminal section; belongs to the trehalose phosphatase family.

It carries out the reaction D-glucose 6-phosphate + UDP-alpha-D-glucose = alpha,alpha-trehalose 6-phosphate + UDP + H(+). This chain is Probable alpha,alpha-trehalose-phosphate synthase [UDP-forming] 2 (TPS2), found in Arabidopsis thaliana (Mouse-ear cress).